Reading from the N-terminus, the 410-residue chain is Protein ea47 (410 aa).

This Escherichia coli (Bacteriophage lambda) protein is Protein ea47 (ea47).